A 273-amino-acid chain; its full sequence is Glutamate 5-kinase (273 aa).

Lys15 provides a ligand contact to ATP. Substrate contacts are provided by Ser55, Asp142, and Asn158. ATP contacts are provided by residues Ser178 to Asp179 and Thr220 to Lys226.

It belongs to the glutamate 5-kinase family.

The protein resides in the cytoplasm. It carries out the reaction L-glutamate + ATP = L-glutamyl 5-phosphate + ADP. The protein operates within amino-acid biosynthesis; L-proline biosynthesis; L-glutamate 5-semialdehyde from L-glutamate: step 1/2. In terms of biological role, catalyzes the transfer of a phosphate group to glutamate to form L-glutamate 5-phosphate. In Streptococcus pyogenes serotype M3 (strain ATCC BAA-595 / MGAS315), this protein is Glutamate 5-kinase.